The sequence spans 382 residues: G-box-binding factor 3 (382 aa).

Positions 1–16 are enriched in basic and acidic residues; that stretch reads MGNSSEEPKPPTKSDK. Disordered stretches follow at residues 1-26, 97-221, and 257-285; these read MGNS…DQTN, MGSL…GVKL, and EREL…AETE. A compositionally biased stretch (polar residues) spans 111–130; sequence TPGTLLSIDTPTKSTGNTDN. Basic and acidic residues predominate over residues 155–165; that stretch reads ADEHKRSRNSS. Residues 166-181 show a composition bias toward low complexity; that stretch reads ETDGSTDGSDGNTTGA. Over residues 182–199 the composition is skewed to basic and acidic residues; that stretch reads DEPKLKRSREGTPTKDGK. Polar residues predominate over residues 202–216; that stretch reads VQASSFHSVSPSSGD. Residues 259–322 form the bZIP domain; that stretch reads ELKRERRKQS…DKLRGANATL (64 aa). The basic motif stretch occupies residues 261–280; it reads KRERRKQSNRESARRSRLRK. The tract at residues 287–322 is leucine-zipper; it reads LARKVEALTAENMALRSELNQLNEKSDKLRGANATL. Residues 329 to 382 are disordered; sequence SEPEKRVPANMLSRVKNSGAGDKNKNQGDNDSNSTSKLHQLLDTKPRAKAVAAG. Residues 357–366 are compositionally biased toward polar residues; the sequence is DNDSNSTSKL.

This sequence belongs to the bZIP family. In terms of assembly, DNA-binding heterodimer. Interacts with GBF4. Interacts with BZIP16 and BZIP68. As to expression, present only in dark grown leaves and roots.

The protein resides in the nucleus. Binds to the G-box motif (5'-CCACGTGG-3') of the rbcS-1A gene promoter. G-box and G-box-like motifs are cis-acting elements defined in promoters of certain plant genes which are regulated by such diverse stimuli as light-induction or hormone control. This Arabidopsis thaliana (Mouse-ear cress) protein is G-box-binding factor 3 (GBF3).